The chain runs to 765 residues: Protein transport protein Sec23A (765 aa).

Cys-61, Cys-66, Cys-85, and Cys-88 together coordinate Zn(2+). The stretch at 632 to 718 is one Gelsolin-like repeat; it reads PEPVLLDSSS…EHGGSQARFL (87 aa).

It belongs to the SEC23/SEC24 family. SEC23 subfamily. As to quaternary structure, COPII is composed of at least five proteins: the Sec23/24 complex, the Sec13/31 complex and Sar1.

It localises to the cytoplasmic vesicle. The protein resides in the COPII-coated vesicle membrane. Its subcellular location is the endoplasmic reticulum membrane. It is found in the cytoplasm. The protein localises to the cytosol. In terms of biological role, component of the coat protein complex II (COPII) which promotes the formation of transport vesicles from the endoplasmic reticulum (ER). The coat has two main functions, the physical deformation of the endoplasmic reticulum membrane into vesicles and the selection of cargo molecules for their transport to the Golgi complex. The chain is Protein transport protein Sec23A from Danio rerio (Zebrafish).